The chain runs to 198 residues: Dephospho-CoA kinase (198 aa).

Residues 4-198 (RIGLTGGIAS…CGLRADGTTW (195 aa)) enclose the DPCK domain. 12 to 17 (ASGKSS) provides a ligand contact to ATP.

Belongs to the CoaE family.

It localises to the cytoplasm. The catalysed reaction is 3'-dephospho-CoA + ATP = ADP + CoA + H(+). It participates in cofactor biosynthesis; coenzyme A biosynthesis; CoA from (R)-pantothenate: step 5/5. Catalyzes the phosphorylation of the 3'-hydroxyl group of dephosphocoenzyme A to form coenzyme A. This is Dephospho-CoA kinase from Parasynechococcus marenigrum (strain WH8102).